The primary structure comprises 117 residues: Alpha-endosulfine (117 aa).

The interval methionine 1 to phenylalanine 53 is disordered. The segment covering arginine 10–leucine 37 has biased composition (basic and acidic residues). Serine 67 is subject to Phosphoserine; by GWL. A disordered region spans residues lysine 76–glycine 117.

The protein belongs to the endosulfine family. In terms of processing, phosphorylation at Ser-67 by GWL during mitosis is essential for interaction with PPP2R2D (PR55-delta) and subsequent inactivation of PP2A.

The protein localises to the cytoplasm. Protein phosphatase inhibitor that specifically inhibits protein phosphatase 2A (PP2A) during mitosis. When phosphorylated at Ser-67 during mitosis, specifically interacts with PPP2R2D (PR55-delta) and inhibits its activity, leading to inactivation of PP2A, an essential condition to keep cyclin-B1-CDK1 activity high during M phase. This Gallus gallus (Chicken) protein is Alpha-endosulfine (ENSA).